A 338-amino-acid chain; its full sequence is Heat-inducible transcription repressor HrcA (338 aa).

It belongs to the HrcA family.

Functionally, negative regulator of class I heat shock genes (grpE-dnaK-dnaJ and groELS operons). Prevents heat-shock induction of these operons. The polypeptide is Heat-inducible transcription repressor HrcA (Nitrosomonas europaea (strain ATCC 19718 / CIP 103999 / KCTC 2705 / NBRC 14298)).